Consider the following 180-residue polypeptide: Centromere protein M (180 aa).

As to quaternary structure, component of the CENPA-NAC complex, at least composed of CENPA, CENPC, CENPH, CENPM, CENPN, CENPT and CENPU. The CENPA-NAC complex interacts with the CENPA-CAD complex, composed of CENPI, CENPK, CENPL, CENPO, CENPP, CENPQ, CENPR and CENPS.

It localises to the nucleus. It is found in the cytoplasm. The protein localises to the chromosome. Its subcellular location is the centromere. The protein resides in the kinetochore. Component of the CENPA-NAC (nucleosome-associated) complex, a complex that plays a central role in assembly of kinetochore proteins, mitotic progression and chromosome segregation. The CENPA-NAC complex recruits the CENPA-CAD (nucleosome distal) complex and may be involved in incorporation of newly synthesized CENPA into centromeres. The protein is Centromere protein M (CENPM) of Bos taurus (Bovine).